The sequence spans 660 residues: Potassium voltage-gated channel subfamily KQT member 1 (660 aa).

Over residues 1–18 (MSSEVKSRWSGSGSQKSG) the composition is skewed to polar residues. The tract at residues 1-67 (MSSEVKSRWS…PESRAADSRA (67 aa)) is disordered. Residues 1 to 113 (MSSEVKSRWS…YNFLERPTGW (113 aa)) are Cytoplasmic-facing. Over residues 53-67 (STDKNPESRAADSRA) the composition is skewed to basic and acidic residues. Residues 114-135 (KCFIYHFTVFLIVLVCLIFSVM) form a helical membrane-spanning segment. Residues 136-146 (STIEQYHYFAN) are Extracellular-facing. The chain crosses the membrane as a helical span at residues 147 to 169 (RALVWMEIVLVVFFGTEYIVRLW). Residues 170 to 185 (SAGCRSKYVGFWGRLR) lie on the Cytoplasmic side of the membrane. Residues 186-211 (FARKPISIIDLIVVVASVIVLCVGSN) form a helical membrane-spanning segment. The Extracellular portion of the chain corresponds to 212 to 219 (GQVFATSA). A helical; Voltage-sensor membrane pass occupies residues 220–235 (IRGIRFLQILRMLHVD). Topologically, residues 236 to 253 (RQGGTWRLLGSVVFIHRQ) are cytoplasmic. Gln-237 lines the a 1,2-diacyl-sn-glycero-3-phospho-(1D-myo-inositol-4,5-bisphosphate) pocket. The chain crosses the membrane as a helical span at residues 254–276 (ELITTLYIGFLGLIFSSYFVYLA). Residues 277–292 (EKDAVDDSGSQQFGSY) are Extracellular-facing. The segment at residues 293–313 (ADALWWGVVTVTTIGYGDKVP) is an intramembrane region (pore-forming). The Extracellular portion of the chain corresponds to 314–315 (QT). The chain crosses the membrane as a helical span at residues 316–341 (WIGRTIASCFSVFAISFFALPAGILG). Residues 342-660 (SGFALKVQQK…RKDQDNQPDL (319 aa)) are Cytoplasmic-facing. The disordered stretch occupies residues 399–426 (SPSPKTKKSVGKRKKLKTDKDNGLNSEK). Residues 403 to 415 (KTKKSVGKRKKLK) show a composition bias toward basic residues. The stretch at 579-615 (KNTIGARLNRVEEKFVHMDQKLNTITDMLHHLVAHQQ) forms a coiled coil.

It belongs to the potassium channel family. KQT (TC 1.A.1.15) subfamily. Kv7.1/KCNQ1 sub-subfamily. Tetramer. Heterotetramer with KCNE1; targets to the membrane raft. Interacts (via C-terminus) with CALM; forms a heterotetramer in a calcium-independent manner. Interacts with KCNE2; form a heterooligomer complex that targets to the membrane raft and leading to currents with an apparently instantaneous activation, a rapid deactivation process and a linear current-voltage relationship and decreases the amplitude of the outward current. Interacts with KCNE3; four KCNE3 molecules are bound to one KCNQ1 tetramer (4:4 KCNQ1:KCNE3 stoichiometry); alters membrane raft localization; affects KCNQ1 structure and gating properties. Interacts with KCNE4; impairs KCNQ1 localization in lipid rafts and inhibits voltage-gated potassium channel activity. Interacts with KCNE5; impairs KCNQ1 localization in lipid rafts and only conducts current upon strong and continued depolarization. In terms of tissue distribution, expressed only in rectal gland and heart. Faintly expressed in intestine. Undetectable in kidney, brain, testis, liver and gills.

It is found in the cell membrane. The protein localises to the cytoplasmic vesicle membrane. It localises to the membrane raft. Its subcellular location is the endoplasmic reticulum. The protein resides in the basolateral cell membrane. It carries out the reaction K(+)(in) = K(+)(out). PIP2 molecule is essential to activate KCNQ channels by inducing the coupling of the voltage-sensing domain (VSD) and the pore-forming domain (PD). Upon channel activation, PIP2 disrupts the VSD-calmodulin/CALM interactions, causing the release of CALM from the VSD which triggers the opening of the gate. Calcium potentiates KCNQ1 channel current through calcium-bound CALM. Calcium-bound CALM competes with PIP2 to stabilize the channel open state. Its function is as follows. Pore-forming subunit of the voltage-gated potassium (Kv) channel involved in the regulation of cardiomyocyte excitability and important in normal development and functions of myocardium, inner ear, stomach and colon. Associates with KCNE beta subunits that modulates current kinetics. Induces a voltage-dependent by rapidly activating and slowly deactivating potassium-selective outward current. Also promotes a delayed voltage activated potassium current showing outward rectification characteristic. During beta-adrenergic receptor stimulation participates in cardiac repolarization by associating with KCNE1 to form the I(Ks) cardiac potassium current that increases the amplitude and slows down the activation kinetics of outward potassium current I(Ks). When associated with KCNE3, forms the potassium channel that is important for cyclic AMP-stimulated intestinal secretion of chloride ions. When associated with KCNE2, forms a heterooligomer complex leading to currents with an apparently instantaneous activation, a rapid deactivation process and a linear current-voltage relationship and decreases the amplitude of the outward current. When associated with KCNE4, inhibits voltage-gated potassium channel activity. When associated with KCNE5, this complex only conducts current upon strong and continued depolarization. This Squalus acanthias (Spiny dogfish) protein is Potassium voltage-gated channel subfamily KQT member 1.